A 98-amino-acid polypeptide reads, in one-letter code: MPYIYMNITLAFVISLIGTLMYRSHLMSSLLCLEGMMLSLFTLNALLSLNMNFTLSTTVPLILLVFAACEAAVGLALLVMISNTYGLDYVQNLNLLQC.

The next 3 membrane-spanning stretches (helical) occupy residues 1–21, 29–49, and 61–81; these read MPYIYMNITLAFVISLIGTLM, SLLCLEGMMLSLFTLNALLSL, and LILLVFAACEAAVGLALLVMI.

This sequence belongs to the complex I subunit 4L family. Core subunit of respiratory chain NADH dehydrogenase (Complex I) which is composed of 45 different subunits.

Its subcellular location is the mitochondrion inner membrane. It catalyses the reaction a ubiquinone + NADH + 5 H(+)(in) = a ubiquinol + NAD(+) + 4 H(+)(out). Core subunit of the mitochondrial membrane respiratory chain NADH dehydrogenase (Complex I) which catalyzes electron transfer from NADH through the respiratory chain, using ubiquinone as an electron acceptor. Part of the enzyme membrane arm which is embedded in the lipid bilayer and involved in proton translocation. The protein is NADH-ubiquinone oxidoreductase chain 4L (MT-ND4L) of Loxodonta africana (African elephant).